The chain runs to 369 residues: Serine/threonine-protein kinase srb10 (369 aa).

The region spanning tyrosine 5–phenylalanine 319 is the Protein kinase domain. Residues isoleucine 11 to valine 19 and lysine 36 each bind ATP. Aspartate 140 acts as the Proton acceptor in catalysis.

It belongs to the protein kinase superfamily. CMGC Ser/Thr protein kinase family. CDC2/CDKX subfamily. Component of the Cdk8 module of the Mediator complex. The Cdk8 module is composed of srb8, srb9, srb10 and srb11. Interacts with med17 and med18.

The protein localises to the nucleus. It carries out the reaction L-seryl-[protein] + ATP = O-phospho-L-seryl-[protein] + ADP + H(+). The catalysed reaction is L-threonyl-[protein] + ATP = O-phospho-L-threonyl-[protein] + ADP + H(+). It catalyses the reaction [DNA-directed RNA polymerase] + ATP = phospho-[DNA-directed RNA polymerase] + ADP + H(+). Catalytic component of the Cdk8 module/Srb8-11 module which is a regulatory module of the Mediator complex that regulates basal RNA polymerase II transcription. The Cdk8 module may sterically hinder the interaction between Mediator and RNA polymerase II leading to transcriptional repression of a subset of genes regulated by Mediator. This Schizosaccharomyces pombe (strain 972 / ATCC 24843) (Fission yeast) protein is Serine/threonine-protein kinase srb10 (srb10).